The sequence spans 457 residues: SH3 domain-binding protein 5 (457 aa).

A compositionally biased stretch (basic and acidic residues) spans 1 to 12; sequence MDTALKRSRSEE. Residues 1–68 form a disordered region; it reads MDTALKRSRS…DDINRRETEL (68 aa). Residues 25–43 are compositionally biased toward acidic residues; that stretch reads EKEEEEERMEQGLEEEEEV. Residues 33-267 are sufficient for interaction with RAB11A and for guanine nucleotide exchange activity; the sequence is MEQGLEEEEE…EIHERRRSNA (235 aa). The segment covering 44–53 has biased composition (basic and acidic residues); the sequence is DPRIQGELEK. Coiled coils occupy residues 46–92, 99–147, 156–202, and 213–257; these read RIQG…LAKK, DSKP…RLLE, AWQE…LEKK, and YFEL…RISD. Residues 308–319 are compositionally biased toward acidic residues; sequence NCGNLVSEDDSE. Residues 308-347 form a disordered region; that stretch reads NCGNLVSEDDSETQSVSSFSSGPTSPSEMPDQFPAVARPG. Low complexity predominate over residues 322-334; the sequence is SVSSFSSGPTSPS. Serine 353 carries the post-translational modification Phosphoserine; by MAPK12 and MAPK9. The disordered stretch occupies residues 371–427; it reads SECSGASSPECEVERGDRAEGAENKMSDKANNNRVLSSTSAGGGRSRSQSSTSLEGQ. Phosphoserine is present on residues serine 377 and serine 378. Residues 382–398 show a composition bias toward basic and acidic residues; it reads EVERGDRAEGAENKMSD. The span at 406-427 shows a compositional bias: low complexity; it reads LSSTSAGGGRSRSQSSTSLEGQ. At serine 420 the chain carries Phosphoserine. Serine 423 is subject to Phosphoserine; by MAPK12.

The protein belongs to the SH3BP5 family. In terms of assembly, interacts with BTK. Interacts with all isoforms of MAPK8, MAPK9, MAPK10 and MAPK12. Interacts with GDP-bound and nucleotide-free forms of RAB11A.

The protein localises to the cytoplasmic vesicle membrane. Its subcellular location is the mitochondrion. Functionally, functions as a guanine nucleotide exchange factor (GEF) with specificity for RAB11A and RAB25. Inhibits the auto- and transphosphorylation activity of BTK. Plays a negative regulatory role in BTK-related cytoplasmic signaling in B-cells. May be involved in BCR-induced apoptotic cell death. This Rattus norvegicus (Rat) protein is SH3 domain-binding protein 5 (Sh3bp5).